We begin with the raw amino-acid sequence, 252 residues long: Trans-aconitate 2-methyltransferase (252 aa).

This sequence belongs to the methyltransferase superfamily. Tam family.

It is found in the cytoplasm. The catalysed reaction is trans-aconitate + S-adenosyl-L-methionine = (E)-3-(methoxycarbonyl)pent-2-enedioate + S-adenosyl-L-homocysteine. Catalyzes the S-adenosylmethionine monomethyl esterification of trans-aconitate. The polypeptide is Trans-aconitate 2-methyltransferase (Escherichia fergusonii (strain ATCC 35469 / DSM 13698 / CCUG 18766 / IAM 14443 / JCM 21226 / LMG 7866 / NBRC 102419 / NCTC 12128 / CDC 0568-73)).